A 354-amino-acid chain; its full sequence is Probable L-ascorbate-6-phosphate lactonase UlaG (354 aa).

The protein belongs to the UlaG family. The cofactor is a divalent metal cation.

The protein localises to the cytoplasm. The catalysed reaction is L-ascorbate 6-phosphate + H2O = 3-dehydro-L-gulonate 6-phosphate. Its pathway is cofactor degradation; L-ascorbate degradation; D-xylulose 5-phosphate from L-ascorbate: step 1/4. Its function is as follows. Probably catalyzes the hydrolysis of L-ascorbate-6-P into 3-keto-L-gulonate-6-P. Is essential for L-ascorbate utilization under anaerobic conditions. The chain is Probable L-ascorbate-6-phosphate lactonase UlaG from Shigella boydii serotype 18 (strain CDC 3083-94 / BS512).